The chain runs to 31 residues: Unknown protein from spot 104 of 2D-PAGE of thylakoid (31 aa).

The protein resides in the plastid. Its subcellular location is the chloroplast thylakoid. In Pisum sativum (Garden pea), this protein is Unknown protein from spot 104 of 2D-PAGE of thylakoid.